The chain runs to 257 residues: Acetylglutamate kinase (257 aa).

Substrate is bound by residues 41-42, Arg-63, and Asn-156; that span reads GG.

It belongs to the acetylglutamate kinase family. ArgB subfamily.

It is found in the cytoplasm. The enzyme catalyses N-acetyl-L-glutamate + ATP = N-acetyl-L-glutamyl 5-phosphate + ADP. The protein operates within amino-acid biosynthesis; L-arginine biosynthesis; N(2)-acetyl-L-ornithine from L-glutamate: step 2/4. Its function is as follows. Catalyzes the ATP-dependent phosphorylation of N-acetyl-L-glutamate. The sequence is that of Acetylglutamate kinase from Geobacillus sp. (strain WCH70).